The following is a 205-amino-acid chain: Large ribosomal subunit protein uL13 (205 aa).

The protein belongs to the universal ribosomal protein uL13 family.

This chain is Large ribosomal subunit protein uL13 (RpL13A), found in Drosophila melanogaster (Fruit fly).